We begin with the raw amino-acid sequence, 144 residues long: Ribosome maturation factor RimP (144 aa).

The protein belongs to the RimP family.

The protein resides in the cytoplasm. Required for maturation of 30S ribosomal subunits. The polypeptide is Ribosome maturation factor RimP (Azoarcus sp. (strain BH72)).